We begin with the raw amino-acid sequence, 228 residues long: Claudin-10 (228 aa).

The helical transmembrane segment at 1 to 21 (MASTASEIIAFMVSISGWVLV) threads the bilayer. Topologically, residues 22-80 (SSTLPTDYWKVSTIDGTVITTATYWANLWKACVTDSTGVSNCKDFPSMLALDGYIQACR) are extracellular. The helical transmembrane segment at 81-101 (GLMIAAVSLGFFGSIFALFGM) threads the bilayer. Residues 102–115 (KCTKVGGSDKAKAK) lie on the Cytoplasmic side of the membrane. The chain crosses the membrane as a helical span at residues 116 to 136 (IACLAGIVFILSGLCSMTGCS). The Extracellular portion of the chain corresponds to 137–160 (LYANKITTEFFDPLFVEQKYELGA). Residues 161–181 (ALFIGWAGASLCIIGGVIFCF) traverse the membrane as a helical segment. Residues 182–228 (SISDNNKTPRYTYNGATSVMSSRTKYHGGEDFKTTNPSKQFDKNAYV) are Cytoplasmic-facing.

This sequence belongs to the claudin family. As to quaternary structure, can form homodimers both in trans (interaction between CLDN10 molecules in opposing membranes) and in cis (interaction between CLDN10 molecules within one membrane). In terms of assembly, interacts with CLDN19. In terms of tissue distribution, expressed in the kidney, eccrine sweat glands and in all layers of the epidermis. In the kidney, it is detected in the thick ascending limb of Henle's loop (TAL). In the sweat glands, it is expressed in cells from secretory portions, corresponding to the clear cells.

The protein localises to the cell junction. Its subcellular location is the tight junction. It is found in the cell membrane. The enzyme catalyses Na(+)(in) = Na(+)(out). The catalysed reaction is Li(+)(in) = Li(+)(out). It catalyses the reaction K(+)(in) = K(+)(out). It carries out the reaction Rb(+)(in) = Rb(+)(out). The enzyme catalyses Cs(+)(in) = Cs(+)(out). The catalysed reaction is NH4(+)(in) = NH4(+)(out). It catalyses the reaction methylamine(out) = methylamine(in). It carries out the reaction Mg(2+)(in) = Mg(2+)(out). The enzyme catalyses Ca(2+)(in) = Ca(2+)(out). The catalysed reaction is Sr(2+)(in) = Sr(2+)(out). It catalyses the reaction chloride(in) = chloride(out). It carries out the reaction nitrate(in) = nitrate(out). Its function is as follows. Forms paracellular channels: polymerizes in tight junction strands with cation- and anion-selective channels through the strands, conveying epithelial permeability in a process known as paracellular tight junction permeability. Forms cation-selective paracellular channels. In sweat glands and in the thick ascending limb (TAL) of Henle's loop in kidney, it controls paracellular sodium permeability which is essential for proper sweat production and renal function. Functionally, forms anion-selective paracellular channels. In renal proximal tubules, it conveys selective chloride over hydrogencarbonate anion permeability which is required for renal chloride reabsorption and salt homeostasis. This chain is Claudin-10, found in Homo sapiens (Human).